The sequence spans 49 residues: Osteocalcin (49 aa).

The residue at position 1 (Gln1) is a Pyrrolidone carboxylic acid. The 47-residue stretch at 1–47 folds into the Gla domain; the sequence is QLINGQGAPAPYPDPLEPKREVCELNPDCDELADQVGLQDAYQRFYG. Pro9 is modified (4-hydroxyproline). 4 residues coordinate Ca(2+): Glu17, Glu21, Glu24, and Asp30. 4-carboxyglutamate is present on residues Glu17, Glu21, and Glu24. Cys23 and Cys29 form a disulfide bridge.

Belongs to the osteocalcin/matrix Gla protein family. Post-translationally, gamma-carboxyglutamate residues are formed by vitamin K dependent carboxylation by GGCX. These residues are essential for the binding of calcium. Decarboxylation promotes the hormone activity.

The protein localises to the secreted. Its function is as follows. The carboxylated form is one of the main organic components of the bone matrix, which constitutes 1-2% of the total bone protein: it acts as a negative regulator of bone formation and is required to limit bone formation without impairing bone resorption or mineralization. The carboxylated form binds strongly to apatite and calcium. Functionally, the uncarboxylated form acts as a hormone secreted by osteoblasts, which regulates different cellular processes, such as energy metabolism, male fertility and brain development. Regulates of energy metabolism by acting as a hormone favoring pancreatic beta-cell proliferation, insulin secretion and sensitivity and energy expenditure. Uncarboxylated osteocalcin hormone also promotes testosterone production in the testes: acts as a ligand for G protein-coupled receptor GPRC6A at the surface of Leydig cells, initiating a signaling response that promotes the expression of enzymes required for testosterone synthesis in a CREB-dependent manner. Also acts as a regulator of brain development: osteocalcin hormone crosses the blood-brain barrier and acts as a ligand for GPR158 on neurons, initiating a signaling response that prevents neuronal apoptosis in the hippocampus, favors the synthesis of all monoamine neurotransmitters and inhibits that of gamma-aminobutyric acid (GABA). Osteocalcin also crosses the placenta during pregnancy and maternal osteocalcin is required for fetal brain development. The chain is Osteocalcin (BGLAP) from Oryctolagus cuniculus (Rabbit).